An 863-amino-acid chain; its full sequence is DNA-directed RNA polymerase subunit beta' (863 aa).

The disordered stretch occupies residues 1 to 83 (MSGEVAQDQP…SKKKETKASQ (83 aa)). A compositionally biased stretch (polar residues) spans 23–36 (EIVNSAITVQSSAK). Residues cysteine 159, cysteine 161, cysteine 180, and cysteine 183 each contribute to the Zn(2+) site. Residues aspartate 621, aspartate 623, and aspartate 625 each contribute to the Mg(2+) site.

It belongs to the RNA polymerase beta' chain family. RpoC1 subfamily. In plastids the minimal PEP RNA polymerase catalytic core is composed of four subunits: alpha, beta, beta', and beta''. When a (nuclear-encoded) sigma factor is associated with the core the holoenzyme is formed, which can initiate transcription. The cofactor is Mg(2+). It depends on Zn(2+) as a cofactor.

The protein localises to the plastid. The protein resides in the chloroplast. It catalyses the reaction RNA(n) + a ribonucleoside 5'-triphosphate = RNA(n+1) + diphosphate. DNA-dependent RNA polymerase catalyzes the transcription of DNA into RNA using the four ribonucleoside triphosphates as substrates. This chain is DNA-directed RNA polymerase subunit beta', found in Nephroselmis olivacea (Green alga).